Reading from the N-terminus, the 155-residue chain is Small ribosomal subunit protein uS7cz/uS7cy (155 aa).

It belongs to the universal ribosomal protein uS7 family. As to quaternary structure, part of the 30S ribosomal subunit.

Its subcellular location is the plastid. The protein resides in the chloroplast. Its function is as follows. One of the primary rRNA binding proteins, it binds directly to 16S rRNA where it nucleates assembly of the head domain of the 30S subunit. The sequence is that of Small ribosomal subunit protein uS7cz/uS7cy (rps7-A) from Populus trichocarpa (Western balsam poplar).